The primary structure comprises 1094 residues: Isoleucine--tRNA ligase (1094 aa).

A 'HIGH' region motif is present at residues 53–63 (PFANGLPHYGH). The short motif at 624-628 (KLSKR) is the 'KMSKS' region element. Lys-627 serves as a coordination point for ATP.

The protein belongs to the class-I aminoacyl-tRNA synthetase family. IleS type 2 subfamily. In terms of assembly, monomer. Zn(2+) serves as cofactor.

It is found in the cytoplasm. The catalysed reaction is tRNA(Ile) + L-isoleucine + ATP = L-isoleucyl-tRNA(Ile) + AMP + diphosphate. Functionally, catalyzes the attachment of isoleucine to tRNA(Ile). As IleRS can inadvertently accommodate and process structurally similar amino acids such as valine, to avoid such errors it has two additional distinct tRNA(Ile)-dependent editing activities. One activity is designated as 'pretransfer' editing and involves the hydrolysis of activated Val-AMP. The other activity is designated 'posttransfer' editing and involves deacylation of mischarged Val-tRNA(Ile). In Rickettsia felis (strain ATCC VR-1525 / URRWXCal2) (Rickettsia azadi), this protein is Isoleucine--tRNA ligase.